A 210-amino-acid polypeptide reads, in one-letter code: Probable nicotinate-nucleotide adenylyltransferase (210 aa).

It belongs to the NadD family.

It catalyses the reaction nicotinate beta-D-ribonucleotide + ATP + H(+) = deamido-NAD(+) + diphosphate. It participates in cofactor biosynthesis; NAD(+) biosynthesis; deamido-NAD(+) from nicotinate D-ribonucleotide: step 1/1. Catalyzes the reversible adenylation of nicotinate mononucleotide (NaMN) to nicotinic acid adenine dinucleotide (NaAD). This chain is Probable nicotinate-nucleotide adenylyltransferase, found in Vesicomyosocius okutanii subsp. Calyptogena okutanii (strain HA).